Consider the following 101-residue polypeptide: NADH-ubiquinone oxidoreductase chain 4L (101 aa).

3 consecutive transmembrane segments (helical) span residues 5–25 (LNCT…IFLN), 29–49 (ILVM…NLIF), and 64–84 (LLIL…LVIY).

The protein belongs to the complex I subunit 4L family.

It is found in the mitochondrion membrane. It carries out the reaction a ubiquinone + NADH + 5 H(+)(in) = a ubiquinol + NAD(+) + 4 H(+)(out). Core subunit of the mitochondrial membrane respiratory chain NADH dehydrogenase (Complex I) that is believed to belong to the minimal assembly required for catalysis. Complex I functions in the transfer of electrons from NADH to the respiratory chain. The immediate electron acceptor for the enzyme is believed to be ubiquinone. In Chondrus crispus (Carrageen Irish moss), this protein is NADH-ubiquinone oxidoreductase chain 4L (ND4L).